Consider the following 906-residue polypeptide: Gamma-tubulin complex component 3 homolog (906 aa).

Residues 208-229 are compositionally biased toward polar residues; it reads GQQPSQQSTTTKGLPNTVSRNV. Residues 208 to 242 form a disordered region; that stretch reads GQQPSQQSTTTKGLPNTVSRNVPRTRREGDSSGSV.

Belongs to the TUBGCP family. Interacts with gamma-tubulin.

It localises to the cytoplasm. Its subcellular location is the cytoskeleton. The protein localises to the microtubule organizing center. It is found in the centrosome. Functionally, necessary for the recruitment of gamma-tubulin to the centrosome and for the formation of a functional centrosome. The protein is Gamma-tubulin complex component 3 homolog (tubgcp3) of Xenopus laevis (African clawed frog).